The primary structure comprises 162 residues: Glycine cleavage system H protein, mitochondrial (162 aa).

The transit peptide at 1-31 directs the protein to the mitochondrion; that stretch reads MALRMWASSTANALRLSSATRPHFSPLSRCF. A Lipoyl-binding domain is found at 53 to 135; the sequence is VATIGITDHA…YEDGWMIKVK (83 aa). An N6-lipoyllysine modification is found at Lys-94.

Belongs to the GcvH family. As to quaternary structure, the glycine cleavage system is composed of four proteins: P, T, L and H. (R)-lipoate serves as cofactor.

The protein resides in the mitochondrion. Its function is as follows. The glycine cleavage system catalyzes the degradation of glycine. The H protein shuttles the methylamine group of glycine from the P protein to the T protein. The chain is Glycine cleavage system H protein, mitochondrial (GDCSH) from Flaveria anomala (Yellowtops).